Consider the following 153-residue polypeptide: CRIB domain-containing protein RIC4 (153 aa).

The 14-residue stretch at 99–112 (IGVPTNVKHVSHIG) folds into the CRIB domain.

As to quaternary structure, interacts with ARAC4/ROP2 and ARAC11/ROP1. As to expression, expressed in roots, leaves, stems, flowers, siliques and pollen.

It localises to the cell membrane. Functionally, functions as a downstream effector of Rho-related GTP binding proteins of the 'Rho of Plants' (ROPs) family. Participates in the propagation of ROP GTPase signals in specific cellular responses. Required for actin cortical microfilament assembly. Activated by ARAC4/ROP2 to promote the assembly of cortical actin microfilaments required for lobe formation and lateral expansion of pavement cells. Interaction with, and activation by ARAC4/ROP2 is inhibited by RIC1. Functions as a downstream effector of ARAC11/ROP1 to promote the assembly of apical F-actin associated with vesicle accumulation in the tip of the growing pollen tube. Counteracts the ARAC11/ROP1-RIC3 pathway, which activates calcium signaling that leads to apical F-actin disassembly associated with exocytosis, to control actin dynamics and pollen tube apical growth. Downstream of ARAC11/ROP1, is involved in the growth responses to the root-colonizing endophytic fungus P.indica. The sequence is that of CRIB domain-containing protein RIC4 (RIC4) from Arabidopsis thaliana (Mouse-ear cress).